A 315-amino-acid chain; its full sequence is tRNA dimethylallyltransferase (315 aa).

An ATP-binding site is contributed by 11–18 (GPTASGKS). 13-18 (TASGKS) is a substrate binding site. Interaction with substrate tRNA stretches follow at residues 36–39 (DSMQ) and 160–164 (QRLIR).

The protein belongs to the IPP transferase family. In terms of assembly, monomer. Mg(2+) is required as a cofactor.

The catalysed reaction is adenosine(37) in tRNA + dimethylallyl diphosphate = N(6)-dimethylallyladenosine(37) in tRNA + diphosphate. Its function is as follows. Catalyzes the transfer of a dimethylallyl group onto the adenine at position 37 in tRNAs that read codons beginning with uridine, leading to the formation of N6-(dimethylallyl)adenosine (i(6)A). In Rickettsia bellii (strain RML369-C), this protein is tRNA dimethylallyltransferase.